Reading from the N-terminus, the 174-residue chain is Protein VdlD (174 aa).

Residues 20–132 (DRTKLLMSYL…YFTMVAVENG (113 aa)) enclose the HotDog ACOT-type domain.

Belongs to the acyl coenzyme A hydrolase family.

The polypeptide is Protein VdlD (vdlD) (Helicobacter pylori (strain J99 / ATCC 700824) (Campylobacter pylori J99)).